Consider the following 459-residue polypeptide: Bifunctional protein GlmU (459 aa).

The interval 1 to 229 is pyrophosphorylase; it reads MSNFAIILAA…FDESLGVNDR (229 aa). UDP-N-acetyl-alpha-D-glucosamine-binding positions include 8–11, Lys-22, Gln-72, and 77–78; these read LAAG and GT. Asp-102 provides a ligand contact to Mg(2+). Gly-139, Glu-154, Asn-169, and Asn-227 together coordinate UDP-N-acetyl-alpha-D-glucosamine. Residue Asn-227 participates in Mg(2+) binding. Residues 230–250 are linker; the sequence is VALATAESVMRRRINHKHMVN. Residues 251 to 459 form an N-acetyltransferase region; it reads GVSFVNPEAT…TRLPHHPKNQ (209 aa). The UDP-N-acetyl-alpha-D-glucosamine site is built by Arg-332 and Lys-350. Residue His-362 is the Proton acceptor of the active site. 2 residues coordinate UDP-N-acetyl-alpha-D-glucosamine: Tyr-365 and Asn-376. Residues Ala-379, 385–386, Ser-404, Ala-422, and Arg-439 each bind acetyl-CoA; that span reads NY.

The protein in the N-terminal section; belongs to the N-acetylglucosamine-1-phosphate uridyltransferase family. This sequence in the C-terminal section; belongs to the transferase hexapeptide repeat family. In terms of assembly, homotrimer. Mg(2+) is required as a cofactor.

Its subcellular location is the cytoplasm. The catalysed reaction is alpha-D-glucosamine 1-phosphate + acetyl-CoA = N-acetyl-alpha-D-glucosamine 1-phosphate + CoA + H(+). It catalyses the reaction N-acetyl-alpha-D-glucosamine 1-phosphate + UTP + H(+) = UDP-N-acetyl-alpha-D-glucosamine + diphosphate. It participates in nucleotide-sugar biosynthesis; UDP-N-acetyl-alpha-D-glucosamine biosynthesis; N-acetyl-alpha-D-glucosamine 1-phosphate from alpha-D-glucosamine 6-phosphate (route II): step 2/2. It functions in the pathway nucleotide-sugar biosynthesis; UDP-N-acetyl-alpha-D-glucosamine biosynthesis; UDP-N-acetyl-alpha-D-glucosamine from N-acetyl-alpha-D-glucosamine 1-phosphate: step 1/1. Its pathway is bacterial outer membrane biogenesis; LPS lipid A biosynthesis. Catalyzes the last two sequential reactions in the de novo biosynthetic pathway for UDP-N-acetylglucosamine (UDP-GlcNAc). The C-terminal domain catalyzes the transfer of acetyl group from acetyl coenzyme A to glucosamine-1-phosphate (GlcN-1-P) to produce N-acetylglucosamine-1-phosphate (GlcNAc-1-P), which is converted into UDP-GlcNAc by the transfer of uridine 5-monophosphate (from uridine 5-triphosphate), a reaction catalyzed by the N-terminal domain. The polypeptide is Bifunctional protein GlmU (Streptococcus pneumoniae (strain Hungary19A-6)).